We begin with the raw amino-acid sequence, 448 residues long: UDP-N-acetylmuramoylalanine--D-glutamate ligase (448 aa).

112-118 (GSNAKST) is a binding site for ATP.

The protein belongs to the MurCDEF family.

Its subcellular location is the cytoplasm. It carries out the reaction UDP-N-acetyl-alpha-D-muramoyl-L-alanine + D-glutamate + ATP = UDP-N-acetyl-alpha-D-muramoyl-L-alanyl-D-glutamate + ADP + phosphate + H(+). The protein operates within cell wall biogenesis; peptidoglycan biosynthesis. In terms of biological role, cell wall formation. Catalyzes the addition of glutamate to the nucleotide precursor UDP-N-acetylmuramoyl-L-alanine (UMA). In Acinetobacter baumannii (strain ACICU), this protein is UDP-N-acetylmuramoylalanine--D-glutamate ligase.